Reading from the N-terminus, the 495-residue chain is Nitrogen fixation regulatory protein (495 aa).

The region spanning 23 to 93 (HPGLFFTMVE…QEMWQTLLQR (71 aa)) is the PAS 1 domain. One can recognise a PAC domain in the interval 94 to 148 (QPWRGQLINQARDGGLYLVDIDITPVLNPQGELEHYLAMQRDISVSYTLEQRLRN). The 24-residue stretch at 151 to 174 (TLMEAVLNNIPAAVVVVDEQDRVV) folds into the PAS 2; truncated domain.

Requires FAD as cofactor.

Its function is as follows. Required for the inhibition of NifA activity in response to oxygen and low level of fixed nitrogen. This is Nitrogen fixation regulatory protein (nifL) from Klebsiella pneumoniae.